A 257-amino-acid polypeptide reads, in one-letter code: UPF0246 protein Spro_0686 (257 aa).

It belongs to the UPF0246 family.

The sequence is that of UPF0246 protein Spro_0686 from Serratia proteamaculans (strain 568).